Consider the following 210-residue polypeptide: Regulatory protein RecX (210 aa).

Residues 28–47 form a disordered region; the sequence is SRRQEEGAASSLFDREAEEK.

The protein belongs to the RecX family.

The protein resides in the cytoplasm. Its function is as follows. Modulates RecA activity. This is Regulatory protein RecX from Corynebacterium efficiens (strain DSM 44549 / YS-314 / AJ 12310 / JCM 11189 / NBRC 100395).